The chain runs to 178 residues: Caveolin-1 (178 aa).

N-acetylserine is present on Ser-2. Position 2 is a phosphoserine (Ser-2). Positions 2–94 (SGGKYVDSEG…WKASFTTFTV (93 aa)) are required for homooligomerization. The Cytoplasmic segment spans residues 2-104 (SGGKYVDSEG…TKYWFYRLLS (103 aa)). Lys-5 carries the N6-acetyllysine; alternate modification. A Glycyl lysine isopeptide (Lys-Gly) (interchain with G-Cter in ubiquitin); alternate cross-link involves residue Lys-5. Tyr-6 bears the Phosphotyrosine mark. Residue Ser-9 is modified to Phosphoserine. Residue Tyr-14 is modified to Phosphotyrosine; by ABL1. Position 25 is a phosphotyrosine (Tyr-25). Glycyl lysine isopeptide (Lys-Gly) (interchain with G-Cter in ubiquitin) cross-links involve residues Lys-26, Lys-30, Lys-39, Lys-47, and Lys-57. The segment at 82–94 (DGIWKASFTTFTV) is interaction with CAVIN3. Residues 105 to 125 (ALFGIPMALIWGIYFAILSFL) constitute an intramembrane region (helical). At 126–178 (HIWAVVPCIKSFLIEIQCISRVYSIYVHTFCDPLFEAIGKIFSNVRINLQKEI) the chain is on the cytoplasmic side. The interacts with SPRY1, SPRY2, SPRY3 and SPRY4 stretch occupies residues 131–142 (VPCIKSFLIEIQ). 3 S-palmitoyl cysteine lipidation sites follow: Cys-133, Cys-143, and Cys-156. Positions 149-160 (SIYVHTFCDPLF) are interacts with SPRY1, SPRY2, and SPRY4. An interacts with SPRY1, SPRY2, SPRY3 and SPRY4 region spans residues 167 to 178 (FSNVRINLQKEI).

It belongs to the caveolin family. Homooligomer. Interacts with GLIPR2. Interacts with NOSTRIN. Interacts with SNAP25 and STX1A. Interacts (via the N-terminus) with DPP4; the interaction is direct. Interacts with CTNNB1, CDH1 and JUP. Interacts with PACSIN2; this interaction induces membrane tubulation. Interacts with SLC7A9. Interacts with BMX and BTK. Interacts with TGFBR1. Interacts with CAVIN3 (via leucine-zipper domain) in a cholesterol-sensitive manner. Interacts with CAVIN1. Interacts with EHD2 in a cholesterol-dependent manner. Forms a ternary complex with UBXN6 and VCP; mediates CAV1 targeting to lysosomes for degradation. Interacts with ABCG1; this interaction regulates ABCG1-mediated cholesterol efflux. Interacts with NEU3; this interaction enhances NEU3 sialidase activity within caveola. Interacts (via C-terminus) with SPRY1, SPRY2 (via C-terminus), SPRY3, and SPRY4. Interacts with IGFBP5; this interaction allows trafficking of IGFBP5 from the plasma membrane to the nucleus. Post-translationally, phosphorylated at Tyr-14 by ABL1 in response to oxidative stress. In terms of processing, ubiquitinated. Undergo monoubiquitination and multi- and/or polyubiquitination. Monoubiquitination of N-terminal lysines promotes integration in a ternary complex with UBXN6 and VCP which promotes oligomeric CAV1 targeting to lysosomes for degradation. Ubiquitinated by ZNRF1; leading to degradation and modulation of the TLR4-mediated immune response.

It localises to the golgi apparatus membrane. The protein localises to the cell membrane. It is found in the membrane. The protein resides in the caveola. Its subcellular location is the membrane raft. Functionally, may act as a scaffolding protein within caveolar membranes. Forms a stable heterooligomeric complex with CAV2 that targets to lipid rafts and drives caveolae formation. Mediates the recruitment of CAVIN proteins (CAVIN1/2/3/4) to the caveolae. Interacts directly with G-protein alpha subunits and can functionally regulate their activity. Involved in the costimulatory signal essential for T-cell receptor (TCR)-mediated T-cell activation. Its binding to DPP4 induces T-cell proliferation and NF-kappa-B activation in a T-cell receptor/CD3-dependent manner. Recruits CTNNB1 to caveolar membranes and may regulate CTNNB1-mediated signaling through the Wnt pathway. Negatively regulates TGFB1-mediated activation of SMAD2/3 by mediating the internalization of TGFBR1 from membrane rafts leading to its subsequent degradation. Binds 20(S)-hydroxycholesterol (20(S)-OHC). The polypeptide is Caveolin-1 (CAV1) (Equus caballus (Horse)).